The following is a 353-amino-acid chain: Photosystem II D2 protein (353 aa).

Threonine 2 is modified (N-acetylthreonine). Threonine 2 is modified (phosphothreonine). A helical transmembrane segment spans residues 41–61; the sequence is CAYFALGGWFTGTTFVTSWYT. Chlorophyll a is bound at residue histidine 118. The helical transmembrane segment at 125–141 threads the bilayer; sequence GFMLRQFELARSVQLRP. Glutamine 130 and asparagine 143 together coordinate pheophytin a. Residues 153–166 traverse the membrane as a helical segment; sequence VFVSVFLIYPLGQS. Histidine 198 contacts chlorophyll a. The chain crosses the membrane as a helical span at residues 208-228; that stretch reads AALLCAIHGATVENTLFEDGD. A plastoquinone is bound by residues histidine 215 and phenylalanine 262. Histidine 215 lines the Fe cation pocket. Position 269 (histidine 269) interacts with Fe cation. The helical transmembrane segment at 279–295 threads the bilayer; that stretch reads GLWMSALGVVGLALNLR.

The protein belongs to the reaction center PufL/M/PsbA/D family. As to quaternary structure, PSII is composed of 1 copy each of membrane proteins PsbA, PsbB, PsbC, PsbD, PsbE, PsbF, PsbH, PsbI, PsbJ, PsbK, PsbL, PsbM, PsbT, PsbX, PsbY, PsbZ, Psb30/Ycf12, at least 3 peripheral proteins of the oxygen-evolving complex and a large number of cofactors. It forms dimeric complexes. Requires The D1/D2 heterodimer binds P680, chlorophylls that are the primary electron donor of PSII, and subsequent electron acceptors. It shares a non-heme iron and each subunit binds pheophytin, quinone, additional chlorophylls, carotenoids and lipids. There is also a Cl(-1) ion associated with D1 and D2, which is required for oxygen evolution. The PSII complex binds additional chlorophylls, carotenoids and specific lipids. as cofactor.

The protein resides in the plastid. The protein localises to the chloroplast thylakoid membrane. It catalyses the reaction 2 a plastoquinone + 4 hnu + 2 H2O = 2 a plastoquinol + O2. In terms of biological role, photosystem II (PSII) is a light-driven water:plastoquinone oxidoreductase that uses light energy to abstract electrons from H(2)O, generating O(2) and a proton gradient subsequently used for ATP formation. It consists of a core antenna complex that captures photons, and an electron transfer chain that converts photonic excitation into a charge separation. The D1/D2 (PsbA/PsbD) reaction center heterodimer binds P680, the primary electron donor of PSII as well as several subsequent electron acceptors. D2 is needed for assembly of a stable PSII complex. The protein is Photosystem II D2 protein of Phaseolus vulgaris (Kidney bean).